Here is a 210-residue protein sequence, read N- to C-terminus: ATP phosphoribosyltransferase (210 aa).

The protein belongs to the ATP phosphoribosyltransferase family. Short subfamily. Heteromultimer composed of HisG and HisZ subunits.

It is found in the cytoplasm. The catalysed reaction is 1-(5-phospho-beta-D-ribosyl)-ATP + diphosphate = 5-phospho-alpha-D-ribose 1-diphosphate + ATP. It participates in amino-acid biosynthesis; L-histidine biosynthesis; L-histidine from 5-phospho-alpha-D-ribose 1-diphosphate: step 1/9. Functionally, catalyzes the condensation of ATP and 5-phosphoribose 1-diphosphate to form N'-(5'-phosphoribosyl)-ATP (PR-ATP). Has a crucial role in the pathway because the rate of histidine biosynthesis seems to be controlled primarily by regulation of HisG enzymatic activity. This chain is ATP phosphoribosyltransferase, found in Picosynechococcus sp. (strain ATCC 27264 / PCC 7002 / PR-6) (Agmenellum quadruplicatum).